A 362-amino-acid chain; its full sequence is tRNA/tmRNA (uracil-C(5))-methyltransferase (362 aa).

The S-adenosyl-L-methionine site is built by Gln-186, Tyr-214, Asn-219, Glu-235, and Asp-295. The Nucleophile role is filled by Cys-320. Glu-354 acts as the Proton acceptor in catalysis.

This sequence belongs to the class I-like SAM-binding methyltransferase superfamily. RNA M5U methyltransferase family. TrmA subfamily.

The catalysed reaction is uridine(54) in tRNA + S-adenosyl-L-methionine = 5-methyluridine(54) in tRNA + S-adenosyl-L-homocysteine + H(+). It carries out the reaction uridine(341) in tmRNA + S-adenosyl-L-methionine = 5-methyluridine(341) in tmRNA + S-adenosyl-L-homocysteine + H(+). In terms of biological role, dual-specificity methyltransferase that catalyzes the formation of 5-methyluridine at position 54 (m5U54) in all tRNAs, and that of position 341 (m5U341) in tmRNA (transfer-mRNA). The polypeptide is tRNA/tmRNA (uracil-C(5))-methyltransferase (Stutzerimonas stutzeri (strain A1501) (Pseudomonas stutzeri)).